The chain runs to 145 residues: LQYRAADTNAADNQIKPSFNIKNNGTSAVDLSTLKIRYYFTKDGSAAVNGWIDWAQLGGSNIQISFGNHTGTNSDTYVELSFSSEAGSIAAGGQSGETQLRMSKTDWSNFNEANDYSFDGTKTAFADWDRVVLYQNGQIVWGTAP.

A CBM3 domain is found at 1 to 145 (LQYRAADTNA…NGQIVWGTAP (145 aa)).

This is an uncharacterized protein from Paenibacillus lautus (Bacillus lautus).